The following is a 348-amino-acid chain: 2-heptyl-4(1H)-quinolone synthase subunit PqsC (348 aa).

Cysteine 129 acts as the Acyl-thioester intermediate in catalysis. Histidine 269 is a catalytic residue.

It belongs to the thiolase-like superfamily. FabH family. As to quaternary structure, forms a tight complex with PqsB.

Its subcellular location is the cytoplasm. It carries out the reaction (2-aminobenzoyl)acetate + octanoyl-CoA + H(+) = 2-heptyl-4(1H)-quinolone + CO2 + CoA + H2O. With respect to regulation, folding of PqsC and binding of octanoate are promoted by PqsB. Binding of the octanoyl group probably increases the binding affinity of the complex for 2-ABA. Activity of the complex is inhibited by 2-aminoacetophenone (2-AA). Functionally, required for the biosynthesis of the quorum-sensing signaling molecules 2-heptyl-4(1H)-quinolone (HHQ) and 2-heptyl-3-hydroxy-4(1H)-quinolone (Pseudomonas quinolone signal or PQS), which are important for biofilm formation and virulence. The PqsC/PqsB complex catalyzes the condensation of 2-aminobenzoylacetate (2-ABA) and octanoyl-CoA to form HHQ. First, PqsC acquires an octanoyl group from octanoyl-CoA and forms an octanoyl-PqsC intermediate. Then, together with PqsB, it catalyzes the coupling of 2-ABA with the octanoate group, leading to decarboxylation and dehydration, and resulting in closure of the quinoline ring. This chain is 2-heptyl-4(1H)-quinolone synthase subunit PqsC, found in Pseudomonas aeruginosa (strain ATCC 15692 / DSM 22644 / CIP 104116 / JCM 14847 / LMG 12228 / 1C / PRS 101 / PAO1).